Consider the following 669-residue polypeptide: Probable potassium transport system protein Kup (669 aa).

A run of 12 helical transmembrane segments spans residues valine 47–leucine 67, valine 86–methionine 106, threonine 144–isoleucine 164, glycine 172–methionine 192, isoleucine 206–isoleucine 226, glycine 252–leucine 272, tryptophan 288–leucine 308, alanine 326–isoleucine 346, isoleucine 378–phenylalanine 398, leucine 404–phenylalanine 424, leucine 435–alanine 455, and isoleucine 460–threonine 480.

It belongs to the HAK/KUP transporter (TC 2.A.72) family.

It localises to the cell inner membrane. It catalyses the reaction K(+)(in) + H(+)(in) = K(+)(out) + H(+)(out). Functionally, transport of potassium into the cell. Likely operates as a K(+):H(+) symporter. The chain is Probable potassium transport system protein Kup from Bdellovibrio bacteriovorus (strain ATCC 15356 / DSM 50701 / NCIMB 9529 / HD100).